The primary structure comprises 346 residues: 4-hydroxy-3-methylbut-2-enyl diphosphate reductase (346 aa).

A [4Fe-4S] cluster-binding site is contributed by cysteine 19. (2E)-4-hydroxy-3-methylbut-2-enyl diphosphate is bound by residues histidine 48 and histidine 84. Dimethylallyl diphosphate is bound by residues histidine 48 and histidine 84. Isopentenyl diphosphate is bound by residues histidine 48 and histidine 84. A [4Fe-4S] cluster-binding site is contributed by cysteine 106. Histidine 134 is a (2E)-4-hydroxy-3-methylbut-2-enyl diphosphate binding site. Residue histidine 134 coordinates dimethylallyl diphosphate. Histidine 134 contacts isopentenyl diphosphate. The active-site Proton donor is the glutamate 136. Threonine 175 serves as a coordination point for (2E)-4-hydroxy-3-methylbut-2-enyl diphosphate. Cysteine 205 is a [4Fe-4S] cluster binding site. (2E)-4-hydroxy-3-methylbut-2-enyl diphosphate contacts are provided by serine 233, serine 234, asparagine 235, and serine 278. Residues serine 233, serine 234, asparagine 235, and serine 278 each coordinate dimethylallyl diphosphate. 4 residues coordinate isopentenyl diphosphate: serine 233, serine 234, asparagine 235, and serine 278.

Belongs to the IspH family. [4Fe-4S] cluster is required as a cofactor.

The enzyme catalyses isopentenyl diphosphate + 2 oxidized [2Fe-2S]-[ferredoxin] + H2O = (2E)-4-hydroxy-3-methylbut-2-enyl diphosphate + 2 reduced [2Fe-2S]-[ferredoxin] + 2 H(+). It catalyses the reaction dimethylallyl diphosphate + 2 oxidized [2Fe-2S]-[ferredoxin] + H2O = (2E)-4-hydroxy-3-methylbut-2-enyl diphosphate + 2 reduced [2Fe-2S]-[ferredoxin] + 2 H(+). It participates in isoprenoid biosynthesis; dimethylallyl diphosphate biosynthesis; dimethylallyl diphosphate from (2E)-4-hydroxy-3-methylbutenyl diphosphate: step 1/1. The protein operates within isoprenoid biosynthesis; isopentenyl diphosphate biosynthesis via DXP pathway; isopentenyl diphosphate from 1-deoxy-D-xylulose 5-phosphate: step 6/6. In terms of biological role, catalyzes the conversion of 1-hydroxy-2-methyl-2-(E)-butenyl 4-diphosphate (HMBPP) into a mixture of isopentenyl diphosphate (IPP) and dimethylallyl diphosphate (DMAPP). Acts in the terminal step of the DOXP/MEP pathway for isoprenoid precursor biosynthesis. The protein is 4-hydroxy-3-methylbut-2-enyl diphosphate reductase of Brucella melitensis biotype 1 (strain ATCC 23456 / CCUG 17765 / NCTC 10094 / 16M).